The sequence spans 301 residues: Protoheme IX farnesyltransferase (301 aa).

The next 9 helical transmembrane spans lie at 29–49 (VVAL…PGAV), 51–71 (LQPL…AAAF), 101–121 (AFSF…WWVN), 123–143 (LTAW…TAYL), 150–170 (NIVI…TAVT), 177–197 (ALLL…ALAI), 223–243 (CILL…LVGM), 244–264 (SGPV…YKAW), and 281–301 (FSIY…YLWG).

This sequence belongs to the UbiA prenyltransferase family. Protoheme IX farnesyltransferase subfamily.

It is found in the cell inner membrane. It carries out the reaction heme b + (2E,6E)-farnesyl diphosphate + H2O = Fe(II)-heme o + diphosphate. The protein operates within porphyrin-containing compound metabolism; heme O biosynthesis; heme O from protoheme: step 1/1. Converts heme B (protoheme IX) to heme O by substitution of the vinyl group on carbon 2 of heme B porphyrin ring with a hydroxyethyl farnesyl side group. This chain is Protoheme IX farnesyltransferase, found in Shewanella denitrificans (strain OS217 / ATCC BAA-1090 / DSM 15013).